A 262-amino-acid polypeptide reads, in one-letter code: Carboxy-S-adenosyl-L-methionine synthase (262 aa).

S-adenosyl-L-methionine is bound by residues Y50, 84–86 (GCS), 137–138 (DI), N152, and R219.

It belongs to the class I-like SAM-binding methyltransferase superfamily. Cx-SAM synthase family. Homodimer.

It catalyses the reaction prephenate + S-adenosyl-L-methionine = carboxy-S-adenosyl-L-methionine + 3-phenylpyruvate + H2O. Functionally, catalyzes the conversion of S-adenosyl-L-methionine (SAM) to carboxy-S-adenosyl-L-methionine (Cx-SAM). The protein is Carboxy-S-adenosyl-L-methionine synthase of Psychrobacter arcticus (strain DSM 17307 / VKM B-2377 / 273-4).